Consider the following 632-residue polypeptide: MAU2 chromatid cohesion factor homolog (632 aa).

2 TPR repeats span residues 453-486 (GGFY…ANAE) and 493-526 (SCSL…ASKI).

It belongs to the SCC4/mau-2 family. Interacts with Nipped-B to form the cohesin loading complex.

The protein resides in the nucleus. It localises to the nucleoplasm. Functionally, required for association of the cohesin complex with chromatin during interphase. Plays a role in sister chromatid cohesion and normal progression through prometaphase. The protein is MAU2 chromatid cohesion factor homolog of Drosophila simulans (Fruit fly).